The chain runs to 464 residues: Argininosuccinate lyase (464 aa).

This sequence belongs to the lyase 1 family. Argininosuccinate lyase subfamily.

The protein resides in the cytoplasm. It catalyses the reaction 2-(N(omega)-L-arginino)succinate = fumarate + L-arginine. It functions in the pathway amino-acid biosynthesis; L-arginine biosynthesis; L-arginine from L-ornithine and carbamoyl phosphate: step 3/3. The sequence is that of Argininosuccinate lyase from Stutzerimonas stutzeri (strain A1501) (Pseudomonas stutzeri).